The following is a 248-amino-acid chain: MAGHSQFKNIMHRKGRQDAMRSKIFSKLAREITVAAKQGSPDPAMNPRLRLAVQNAKAQSMPKDNIERAIKKASGSDVENYDEVRYEGYGPGGVAVIVEALTDNRNRTASNIRAAFTKSGGALGETGSVSFMFNRIGEIIYKPEAGTTDNIMDAAIEAGAEDVQSEETGHHIICTFEDIGEVSKMLEAKLGEAESIKTVWKATTLTPVDEEKALSILRLISTLEEDDDVQNVYANFDVSDEILAKLSA.

It belongs to the TACO1 family.

It is found in the cytoplasm. In Bartonella henselae (strain ATCC 49882 / DSM 28221 / CCUG 30454 / Houston 1) (Rochalimaea henselae), this protein is Probable transcriptional regulatory protein BH14810.